The chain runs to 214 residues: GSGTPTEAQTQPQQGGAHERVDLPGNMADALSQQQGQVDAATQGMTGAASTLPTAPATVMSGAAAREATRPVQGTAPQQHKTPAKTAAAKPTATQHKSPTTVYTPPAKPSSTAKAGAVASSGSSVQSAPGSHYTLQLSSASRSDTLNAYAKQQKLQNYLVYATKRDGKPWYVLVSGNYASSAEAKRAIASLPADVQAKKPWVRPVHQVQQDLKK.

Composition is skewed to polar residues over residues 1–14 and 43–53; these read GSGT…QPQQ and QGMTGAASTLP. The segment at 1 to 133 is disordered; that stretch reads GSGTPTEAQT…SVQSAPGSHY (133 aa). Residues 44–65 traverse the membrane as a helical segment; that stretch reads GMTGAASTLPTAPATVMSGAAA. Composition is skewed to low complexity over residues 78–97 and 110–131; these read QQHK…TQHK and SSTA…APGS. Residues 127-204 enclose the SPOR domain; sequence SAPGSHYTLQ…VQAKKPWVRP (78 aa).

It belongs to the DamX family.

Its subcellular location is the cell inner membrane. In terms of biological role, non-essential cell division protein. This Serratia marcescens protein is Cell division protein DamX.